Consider the following 361-residue polypeptide: Peptide chain release factor 1 (361 aa).

Gln-235 carries the N5-methylglutamine modification. The segment at 287–309 (QKEASAMRSAQVGSGDRSERIRT) is disordered.

Belongs to the prokaryotic/mitochondrial release factor family. Post-translationally, methylated by PrmC. Methylation increases the termination efficiency of RF1.

The protein localises to the cytoplasm. Peptide chain release factor 1 directs the termination of translation in response to the peptide chain termination codons UAG and UAA. The polypeptide is Peptide chain release factor 1 (Chlamydia caviae (strain ATCC VR-813 / DSM 19441 / 03DC25 / GPIC) (Chlamydophila caviae)).